Consider the following 439-residue polypeptide: MSATTPAAAAPKKPFYRVLYIQVLVAIVLGVIVGWLWPEIGKNDWIKALGDGFVKLIKMVIAPVIFCTVVSGIAHVSEVKKVGRVAIKALIYFEIVSTFALALGLIVANVIQPGAGFQGQTNAAAVANYAKQASEMKSVDFVLHIIPDTVVGAFAQGEILQVLLFSILFGIALMSLGERGHTMRAFVDDAAHAIFGVIAIVVKAAPIGAFGAMAFTIGRYGPQALGNLAGLIATFYLTALAFVIIVLGIIARIAGFSIFKFLTYIKDELLIVLGTSSSESALPQMMEKLERLGCSKPVVGLVVPTGYSFNLDGTNIYMTLATLFIAQAMNVHLSFGEQITILLVAMLTSKGASGITGAGFITLAGTLAAVRPELVPGMAIVLGIDKFMSECRALTNLCGNGVACVIVAWWEGELDRDKLRAALDRDIDPSDVEVAVTTG.

6 helical membrane-spanning segments follow: residues 18–38 (VLYIQVLVAIVLGVIVGWLWP), 56–76 (LIKMVIAPVIFCTVVSGIAHV), 91–111 (IYFEIVSTFALALGLIVANVI), 157–177 (GEILQVLLFSILFGIALMSLG), 193–213 (AIFGVIAIVVKAAPIGAFGAM), and 231–251 (LIATFYLTALAFVIIVLGIIA).

This sequence belongs to the dicarboxylate/amino acid:cation symporter (DAACS) (TC 2.A.23) family.

The protein localises to the cell inner membrane. Its function is as follows. Responsible for the transport of dicarboxylates such as succinate, fumarate, and malate from the periplasm across the membrane. The sequence is that of C4-dicarboxylate transport protein 1 from Bradyrhizobium sp. (strain ORS 278).